Here is a 260-residue protein sequence, read N- to C-terminus: UPF0294 protein plu0699 (260 aa).

It belongs to the UPF0294 family.

The protein localises to the cytoplasm. The protein is UPF0294 protein plu0699 of Photorhabdus laumondii subsp. laumondii (strain DSM 15139 / CIP 105565 / TT01) (Photorhabdus luminescens subsp. laumondii).